The chain runs to 318 residues: Methionyl-tRNA formyltransferase (318 aa).

Position 112-115 (112-115) interacts with (6S)-5,6,7,8-tetrahydrofolate; it reads SILP.

It belongs to the Fmt family.

It carries out the reaction L-methionyl-tRNA(fMet) + (6R)-10-formyltetrahydrofolate = N-formyl-L-methionyl-tRNA(fMet) + (6S)-5,6,7,8-tetrahydrofolate + H(+). Its function is as follows. Attaches a formyl group to the free amino group of methionyl-tRNA(fMet). The formyl group appears to play a dual role in the initiator identity of N-formylmethionyl-tRNA by promoting its recognition by IF2 and preventing the misappropriation of this tRNA by the elongation apparatus. The chain is Methionyl-tRNA formyltransferase from Haemophilus influenzae (strain PittEE).